The primary structure comprises 127 residues: MTRARRQAEARGRWAEWLAMAWLVAKGYRLLDHRARTAAGEIDLVARRGEYLVFIEVKARATRAEALDSIGPRQRGRITRAASIWRAPRSSLHHLHLRYDLVLVVPGRWPQHRRAAWVPGDSARDLL.

Belongs to the UPF0102 family.

In Maricaulis maris (strain MCS10) (Caulobacter maris), this protein is UPF0102 protein Mmar10_3014.